A 206-amino-acid polypeptide reads, in one-letter code: RNA pyrophosphohydrolase (206 aa).

The region spanning 6–150 (GYRPNVGIVI…KRDVYRKVMK (145 aa)) is the Nudix hydrolase domain. A Nudix box motif is present at residues 38-59 (GGINEGENIETAMYRELYEEVG). Over residues 162 to 191 (KPETVEKPRVERTEKRDFQKRDNQKREFRK) the composition is skewed to basic and acidic residues. A disordered region spans residues 162-206 (KPETVEKPRVERTEKRDFQKRDNQKREFRKSARMWNNSHQKGKAQ).

Belongs to the Nudix hydrolase family. RppH subfamily. A divalent metal cation is required as a cofactor.

Functionally, accelerates the degradation of transcripts by removing pyrophosphate from the 5'-end of triphosphorylated RNA, leading to a more labile monophosphorylated state that can stimulate subsequent ribonuclease cleavage. The protein is RNA pyrophosphohydrolase of Actinobacillus pleuropneumoniae serotype 5b (strain L20).